The chain runs to 493 residues: Matrilin-1 (493 aa).

The signal sequence occupies residues Met1–Gly23. Residues Ala24–Val220 enclose the VWFA 1 domain. N-linked (GlcNAc...) asparagine glycosylation occurs at Asn74. The EGF-like domain occupies Val221–Ser261. Cystine bridges form between Cys225–Cys236, Cys232–Cys245, and Cys247–Cys260. The VWFA 2 domain occupies Ala262 to Val450. A coiled-coil region spans residues Lys462–Ile492.

Homotrimer. In terms of tissue distribution, expressed in xyphoid cartilage and chondrocytes (at protein level).

The protein localises to the secreted. Its subcellular location is the extracellular space. It localises to the extracellular matrix. A major component of the extracellular matrix of non-articular cartilage. Binds to type 2 collagens and forms long concatenated protein networks as part of the extracellular matrix. Required for the network-like organization and bundling of collagen fibrils surrounding chondrocytes in the zones of maturation and hypertrophy. Required for mechanotransduction and adaption to mechanical loading in cartilage chondrocytes, resulting in an increase in expression of the extracellular matrix components ACAN and COL2A1. Acts as a moderator of angiogenesis in response to injury. The sequence is that of Matrilin-1 from Gallus gallus (Chicken).